The sequence spans 471 residues: 3-isopropylmalate dehydratase large subunit (471 aa).

[4Fe-4S] cluster contacts are provided by cysteine 351, cysteine 412, and cysteine 415.

Belongs to the aconitase/IPM isomerase family. LeuC type 1 subfamily. As to quaternary structure, heterodimer of LeuC and LeuD. Requires [4Fe-4S] cluster as cofactor.

The catalysed reaction is (2R,3S)-3-isopropylmalate = (2S)-2-isopropylmalate. Its pathway is amino-acid biosynthesis; L-leucine biosynthesis; L-leucine from 3-methyl-2-oxobutanoate: step 2/4. Its function is as follows. Catalyzes the isomerization between 2-isopropylmalate and 3-isopropylmalate, via the formation of 2-isopropylmaleate. This is 3-isopropylmalate dehydratase large subunit from Hahella chejuensis (strain KCTC 2396).